Here is a 989-residue protein sequence, read N- to C-terminus: DEAD-box ATP-dependent RNA helicase 45 (989 aa).

Basic and acidic residues-rich tracts occupy residues 1 to 39 (MLEK…KRCD) and 64 to 101 (RDSK…EKEK). 2 disordered regions span residues 1–248 (MLEK…AADE) and 305–330 (QGED…DDEE). Positions 88–182 (LKRDRERRER…ELKRQNEEAQ (95 aa)) form a coiled coil. S119 bears the Phosphoserine mark. The span at 134–179 (SRHGDDDVEKKTRDEQVEDEQKQLAEEVEKRRRRVQEWQELKRQNE) shows a compositional bias: basic and acidic residues. S200 carries the phosphoserine modification. Over residues 203-222 (EVKSDSEMDVDRDTKLENGG) the composition is skewed to basic and acidic residues. Over residues 230–239 (ENETAVTVSE) the composition is skewed to polar residues. Residues 321–330 (DPSLDEDDEE) are compositionally biased toward acidic residues. Positions 396–424 (QFWHQTGLTSKILDTLKKLNYEKPMPIQA) match the Q motif motif. The Helicase ATP-binding domain occupies 427 to 605 (LPIIMSGRDC…RKVLNKPVEI (179 aa)). Position 440-447 (440-447 (AKTGSGKT)) interacts with ATP. The short motif at 553–556 (DEAD) is the DEAD box element. A Helicase C-terminal domain is found at 590-748 (QVETLARKVL…PVPDDVKAVA (159 aa)).

Belongs to the DEAD box helicase family. DDX46/PRP5 subfamily.

The enzyme catalyses ATP + H2O = ADP + phosphate + H(+). In Arabidopsis thaliana (Mouse-ear cress), this protein is DEAD-box ATP-dependent RNA helicase 45 (RH45).